The sequence spans 205 residues: Ribosomal RNA small subunit methyltransferase G (205 aa).

S-adenosyl-L-methionine-binding positions include Gly-73, Leu-78, 124–125 (VE), and Arg-139.

The protein belongs to the methyltransferase superfamily. RNA methyltransferase RsmG family.

It localises to the cytoplasm. It catalyses the reaction guanosine(527) in 16S rRNA + S-adenosyl-L-methionine = N(7)-methylguanosine(527) in 16S rRNA + S-adenosyl-L-homocysteine. Functionally, specifically methylates the N7 position of guanine in position 527 of 16S rRNA. The sequence is that of Ribosomal RNA small subunit methyltransferase G from Erwinia tasmaniensis (strain DSM 17950 / CFBP 7177 / CIP 109463 / NCPPB 4357 / Et1/99).